We begin with the raw amino-acid sequence, 512 residues long: Histidine ammonia-lyase (512 aa).

Positions 143–145 (ASG) form a cross-link, 5-imidazolinone (Ala-Gly). At S144 the chain carries 2,3-didehydroalanine (Ser).

This sequence belongs to the PAL/histidase family. In terms of processing, contains an active site 4-methylidene-imidazol-5-one (MIO), which is formed autocatalytically by cyclization and dehydration of residues Ala-Ser-Gly.

The protein resides in the cytoplasm. The enzyme catalyses L-histidine = trans-urocanate + NH4(+). Its pathway is amino-acid degradation; L-histidine degradation into L-glutamate; N-formimidoyl-L-glutamate from L-histidine: step 1/3. The polypeptide is Histidine ammonia-lyase (Ruegeria pomeroyi (strain ATCC 700808 / DSM 15171 / DSS-3) (Silicibacter pomeroyi)).